The sequence spans 281 residues: Auxin-responsive protein IAA19 (281 aa).

The short motif at 40–44 (LRLGL) is the EAR-like (transcriptional repression) element. The segment at 66–126 (LGPAPPPRGG…AAGAPRAAKA (61 aa)) is disordered. Positions 79–91 (GFVDSLDRSEGRR) are enriched in basic and acidic residues. Positions 114–126 (GEAAAGAPRAAKA) are enriched in low complexity. In terms of domain architecture, PB1 spans 161 to 265 (CCYVKVSMDG…RKLRIMRGSD (105 aa)).

This sequence belongs to the Aux/IAA family. Homodimers and heterodimers. Expressed in etiolated seedlings and flowers.

It is found in the nucleus. In terms of biological role, aux/IAA proteins are short-lived transcriptional factors that function as repressors of early auxin response genes at low auxin concentrations. The chain is Auxin-responsive protein IAA19 (IAA19) from Oryza sativa subsp. japonica (Rice).